The chain runs to 299 residues: Bifunctional protein FolD (299 aa).

NADP(+)-binding positions include 168-170 (GRS), S193, and I234.

It belongs to the tetrahydrofolate dehydrogenase/cyclohydrolase family. Homodimer.

The catalysed reaction is (6R)-5,10-methylene-5,6,7,8-tetrahydrofolate + NADP(+) = (6R)-5,10-methenyltetrahydrofolate + NADPH. It carries out the reaction (6R)-5,10-methenyltetrahydrofolate + H2O = (6R)-10-formyltetrahydrofolate + H(+). The protein operates within one-carbon metabolism; tetrahydrofolate interconversion. Catalyzes the oxidation of 5,10-methylenetetrahydrofolate to 5,10-methenyltetrahydrofolate and then the hydrolysis of 5,10-methenyltetrahydrofolate to 10-formyltetrahydrofolate. This Brucella abortus (strain S19) protein is Bifunctional protein FolD.